The chain runs to 107 residues: uncharacterized protein (107 aa).

The segment covering 1-14 (MTERNASGRMNTKG) has biased composition (polar residues). The disordered stretch occupies residues 1–20 (MTERNASGRMNTKGRSIKET).

Its subcellular location is the mitochondrion. This is an uncharacterized protein from Arabidopsis thaliana (Mouse-ear cress).